Reading from the N-terminus, the 196-residue chain is Large ribosomal subunit protein uL18 (196 aa).

This sequence belongs to the universal ribosomal protein uL18 family. Part of the 50S ribosomal subunit. Contacts the 5S and 23S rRNAs.

Functionally, this is one of the proteins that bind and probably mediate the attachment of the 5S RNA into the large ribosomal subunit, where it forms part of the central protuberance. The protein is Large ribosomal subunit protein uL18 of Thermofilum pendens (strain DSM 2475 / Hrk 5).